The chain runs to 541 residues: Chaperonin GroEL (541 aa).

Residues 30 to 33 (TLGP), K51, 87 to 91 (DGTTT), G415, and D495 each bind ATP.

This sequence belongs to the chaperonin (HSP60) family. As to quaternary structure, forms a cylinder of 14 subunits composed of two heptameric rings stacked back-to-back. Interacts with the co-chaperonin GroES.

It localises to the cytoplasm. The catalysed reaction is ATP + H2O + a folded polypeptide = ADP + phosphate + an unfolded polypeptide.. Its function is as follows. Together with its co-chaperonin GroES, plays an essential role in assisting protein folding. The GroEL-GroES system forms a nano-cage that allows encapsulation of the non-native substrate proteins and provides a physical environment optimized to promote and accelerate protein folding. The polypeptide is Chaperonin GroEL (Pantoea ananas (Erwinia uredovora)).